A 212-amino-acid chain; its full sequence is Ribosomal RNA large subunit methyltransferase E (212 aa).

Residues Met-1 to Ala-26 are disordered. S-adenosyl-L-methionine is bound by residues Gly-63, Trp-65, Asp-83, Asp-101, and Asp-122. Lys-162 functions as the Proton acceptor in the catalytic mechanism.

The protein belongs to the class I-like SAM-binding methyltransferase superfamily. RNA methyltransferase RlmE family.

The protein resides in the cytoplasm. The catalysed reaction is uridine(2552) in 23S rRNA + S-adenosyl-L-methionine = 2'-O-methyluridine(2552) in 23S rRNA + S-adenosyl-L-homocysteine + H(+). Its function is as follows. Specifically methylates the uridine in position 2552 of 23S rRNA at the 2'-O position of the ribose in the fully assembled 50S ribosomal subunit. In Sorangium cellulosum (strain So ce56) (Polyangium cellulosum (strain So ce56)), this protein is Ribosomal RNA large subunit methyltransferase E.